A 319-amino-acid polypeptide reads, in one-letter code: tRNA pseudouridine synthase B (319 aa).

The active-site Nucleophile is Asp-49.

This sequence belongs to the pseudouridine synthase TruB family. Type 1 subfamily.

The enzyme catalyses uridine(55) in tRNA = pseudouridine(55) in tRNA. In terms of biological role, responsible for synthesis of pseudouridine from uracil-55 in the psi GC loop of transfer RNAs. This is tRNA pseudouridine synthase B from Aeromonas salmonicida (strain A449).